We begin with the raw amino-acid sequence, 97 residues long: ESAT-6-like protein EsxG (97 aa).

Ser2 carries the N-acetylserine modification.

The protein belongs to the WXG100 family. CFP-10 subfamily. As to quaternary structure, forms a tight 1:1 complex with EsxH.

The protein resides in the secreted. In terms of biological role, esxG, in complex with EsxH, disrupts ESCRT function and impairs host phagosome maturation, thereby promoting intracellular bacterial growth. The complex acts by interacting, via EsxH, with the host hepatocyte growth factor-regulated tyrosine kinase substrate (HGS/HRS), a component of the ESCRT machinery. EsxG stabilizes EsxH in the host cytosol. The sequence is that of ESAT-6-like protein EsxG from Mycobacterium tuberculosis (strain ATCC 25618 / H37Rv).